Reading from the N-terminus, the 583-residue chain is Ankyrin repeat-containing protein NPR4 (583 aa).

7 ANK repeats span residues His68–Ala97, Ala119–Val148, Ser154–Lys183, Ala188–Glu218, Asn223–Arg252, Lys257–Met286, and Asn291–Ala321. 4 consecutive transmembrane segments (helical) span residues Val414 to Gly434, Ile452 to Ile472, Leu492 to Leu512, and Trp518 to Met538.

Its subcellular location is the cell membrane. In terms of biological role, involved in salt stress tolerance. This Oryza sativa subsp. japonica (Rice) protein is Ankyrin repeat-containing protein NPR4.